The sequence spans 344 residues: L-rhamnose-proton symporter (344 aa).

10 helical membrane passes run 4-24, 38-58, 68-88, 101-121, 137-157, 175-195, 214-234, 259-279, 290-310, and 323-343; these read AITMGIFWHLIGAASAACFYA, WSVGGIVSWIILPWAISALLL, FSLSTLLPVFLFGAMWGIGNI, MGIGIAIGITLIVGTLMTPII, TLLGVLVALIGVGIVTRAGQL, LVLAVMCGIFSAGMSFAMNAA, LPSYVVIMGGGAIINLGFCFI, VLLSTLGGLMWYLQFFFYAWG, ISWMLHMSFYVLCGGIVGLVL, and VLSLGCVVIIVAANIVGIGMA.

This sequence belongs to the L-rhamnose transporter (TC 2.A.7.6) family.

It is found in the cell inner membrane. It carries out the reaction L-rhamnopyranose(in) + H(+)(in) = L-rhamnopyranose(out) + H(+)(out). Its function is as follows. Uptake of L-rhamnose across the cytoplasmic membrane with the concomitant transport of protons into the cell (symport system). The protein is L-rhamnose-proton symporter of Escherichia coli (strain ATCC 8739 / DSM 1576 / NBRC 3972 / NCIMB 8545 / WDCM 00012 / Crooks).